The following is a 172-amino-acid chain: Adenine phosphoribosyltransferase (172 aa).

Belongs to the purine/pyrimidine phosphoribosyltransferase family. In terms of assembly, homodimer.

Its subcellular location is the cytoplasm. The catalysed reaction is AMP + diphosphate = 5-phospho-alpha-D-ribose 1-diphosphate + adenine. Its pathway is purine metabolism; AMP biosynthesis via salvage pathway; AMP from adenine: step 1/1. Functionally, catalyzes a salvage reaction resulting in the formation of AMP, that is energically less costly than de novo synthesis. This Clostridium botulinum (strain Loch Maree / Type A3) protein is Adenine phosphoribosyltransferase.